The following is a 268-amino-acid chain: Undecaprenyl-diphosphatase 1 (268 aa).

Transmembrane regions (helical) follow at residues 5–25 (SIIS…IPVS), 43–63 (GNTF…LVYF), 84–104 (LAVL…HDFI), 107–127 (VLFE…FILL), 184–204 (AAEF…VLDL), 218–238 (LIAV…RSLL), and 247–267 (APFA…LLVI).

The protein belongs to the UppP family.

The protein localises to the cell inner membrane. The catalysed reaction is di-trans,octa-cis-undecaprenyl diphosphate + H2O = di-trans,octa-cis-undecaprenyl phosphate + phosphate + H(+). Functionally, catalyzes the dephosphorylation of undecaprenyl diphosphate (UPP). Confers resistance to bacitracin. The polypeptide is Undecaprenyl-diphosphatase 1 (Agrobacterium fabrum (strain C58 / ATCC 33970) (Agrobacterium tumefaciens (strain C58))).